Consider the following 182-residue polypeptide: Adenine phosphoribosyltransferase (182 aa).

This sequence belongs to the purine/pyrimidine phosphoribosyltransferase family. As to quaternary structure, homodimer.

Its subcellular location is the cytoplasm. It carries out the reaction AMP + diphosphate = 5-phospho-alpha-D-ribose 1-diphosphate + adenine. The protein operates within purine metabolism; AMP biosynthesis via salvage pathway; AMP from adenine: step 1/1. Functionally, catalyzes a salvage reaction resulting in the formation of AMP, that is energically less costly than de novo synthesis. The sequence is that of Adenine phosphoribosyltransferase from Pseudomonas aeruginosa (strain LESB58).